Consider the following 540-residue polypeptide: Ipecac alkaloid beta-glucosidase 9 (540 aa).

Residues Gln36, His140, 185–186, Tyr350, Glu421, Trp470, and Phe486 contribute to the a beta-D-glucoside site; that span reads NE. The active-site Proton donor is the Glu186. The Nucleophile role is filled by Glu421.

Belongs to the glycosyl hydrolase 1 family.

The protein resides in the cytoplasm. The protein localises to the cytosol. It catalyses the reaction deacetylipecoside + H2O = deacetylipecoside aglycone + D-glucose. It carries out the reaction deacetylisoipecoside + H2O = deacetylisoipecoside aglycone + D-glucose. It functions in the pathway alkaloid biosynthesis. Its function is as follows. Beta-glucosidase catalyzing deglucosylation on N-deacetylisoipecoside and N-deacetylipecoside. This chain is Ipecac alkaloid beta-glucosidase 9, found in Carapichea ipecacuanha (Ipecac).